We begin with the raw amino-acid sequence, 68 residues long: DNA-directed RNA polymerase subunit omega (68 aa).

This sequence belongs to the RNA polymerase subunit omega family. In terms of assembly, the RNAP catalytic core consists of 2 alpha, 1 beta, 1 beta' and 1 omega subunit. When a sigma factor is associated with the core the holoenzyme is formed, which can initiate transcription.

The catalysed reaction is RNA(n) + a ribonucleoside 5'-triphosphate = RNA(n+1) + diphosphate. Functionally, promotes RNA polymerase assembly. Latches the N- and C-terminal regions of the beta' subunit thereby facilitating its interaction with the beta and alpha subunits. This is DNA-directed RNA polymerase subunit omega from Sulfurovum sp. (strain NBC37-1).